The primary structure comprises 762 residues: 1-phosphatidylinositol 4,5-bisphosphate phosphodiesterase delta-4 (762 aa).

Residues 16-124 form the PH domain; sequence LLMQEGMPMR…WMRGLQLLVD (109 aa). The substrate binding stretch occupies residues 26 to 53; that stretch reads KVRSKSWKKLRYFRLQNDGMTVWHARQA. EF-hand domains lie at 134–169, 170–205, and 206–237; these read RLDQ…MNVE, MDQE…LTKR, and AEVQ…EQKE. Residues Asp147, Asn149, Asp151, Lys153, Glu158, Asp183, Ser185, Ser187, Thr189, and Glu194 each coordinate Ca(2+). Residues 213–243 carry the GBA motif; that stretch reads ESFSADGQKLTLLEFLDFLREEQKERDCTSE. Residues 290-435 form the PI-PLC X-box domain; that stretch reads QDMTQPLNHY…LRRRILVKGK (146 aa). His305 is an active-site residue. Ca(2+) contacts are provided by Asn306, Glu335, and Asp337. His350 is a catalytic residue. Glu384 is a Ca(2+) binding site. Substrate contacts are provided by Lys433 and Lys435. The segment covering 443–471 has biased composition (acidic residues); the sequence is LEYEEEEAEPELEESELALESQFETEPEP. Positions 443-483 are disordered; it reads LEYEEEEAEPELEESELALESQFETEPEPQEQNLQSKDKKK. Ser457 is subject to Phosphoserine. The 117-residue stretch at 493–609 folds into the PI-PLC Y-box domain; the sequence is LSSLVIYLKS…GYVLKPDFLR (117 aa). Substrate contacts are provided by Ser522 and Arg549. The 128-residue stretch at 609-736 folds into the C2 domain; that stretch reads RDIQSSFHPE…QGYRHIHLLS (128 aa). Positions 650, 652, 676, 705, 706, and 707 each coordinate Ca(2+). The short motif at 731–734 is the PDZ-binding element; it reads HIHL.

As to quaternary structure, interacts with GRIP1. Interacts (via GBA motif) with guanine nucleotide-binding protein G(i) alpha subunit GNAI3 (inactive GDP-bound form); low-affinity interaction. Ca(2+) is required as a cofactor.

The protein localises to the membrane. It localises to the nucleus. The protein resides in the cytoplasm. Its subcellular location is the endoplasmic reticulum. The enzyme catalyses a 1,2-diacyl-sn-glycero-3-phospho-(1D-myo-inositol-4,5-bisphosphate) + H2O = 1D-myo-inositol 1,4,5-trisphosphate + a 1,2-diacyl-sn-glycerol + H(+). It catalyses the reaction a 1,2-diacyl-sn-glycero-3-phospho-(1D-myo-inositol) + H2O = 1D-myo-inositol 1-phosphate + a 1,2-diacyl-sn-glycerol + H(+). In terms of biological role, hydrolyzes the phosphatidylinositol 4,5-bisphosphate (PIP2) to generate 2 second messenger molecules diacylglycerol (DAG) and inositol 1,4,5-trisphosphate (IP3). DAG mediates the activation of protein kinase C (PKC), while IP3 releases Ca(2+) from intracellular stores. Required for acrosome reaction in sperm during fertilization, probably by acting as an important enzyme for intracellular Ca(2+) mobilization in the zona pellucida-induced acrosome reaction. May play a role in cell growth. Modulates the liver regeneration in cooperation with nuclear PKC. Overexpression up-regulates the Erk signaling pathway and proliferation. This chain is 1-phosphatidylinositol 4,5-bisphosphate phosphodiesterase delta-4 (PLCD4), found in Pongo abelii (Sumatran orangutan).